A 468-amino-acid polypeptide reads, in one-letter code: MTLYRSLWKKGCMLLLSLVLSLTAFIGSPSNTASAAVADDIQASVMGPLAKINDWGSFKKQLQTLKNNGVYAITTDVWWGYVESAGDNQFDWSYYKTYADAVKEAGLKWVPIISTHKCGGNVGDDCNIPLPSWLSSKGSADEMQFKDESGYANNEALSPLWSGTGKQYDELYASFAQNFAGYKSIIPKIYLSGGPSGELRYPSYYPAAGWSYPGRGKFQAYTETAKNAFRTAMNDKYGSLDKINTAWGTKLTSLSQINPPTDGDGFYTNGGYNSAYGKDFLSWYQSVLEKHLGVIGAAAHKNFDSVFGVRIGAKISGLHWQMNNPAMPHSTEQAGGYYDYNRLIQKFKDADLDLTFTCLEMSDSGTAPNYSLPSTLVDTVSSIANAKGVRLNGENALQTGGSGFQKIEEKITKFGYHGFTLLRINNLVNNDGSPTGELSGFKQYIISKAKPDNNGGTGNKVTIYYKKG.

A signal peptide spans 1 to 36; sequence MTLYRSLWKKGCMLLLSLVLSLTAFIGSPSNTASAA. A substrate-binding site is contributed by D76. Ca(2+)-binding residues include E83 and D87. The substrate site is built by H116 and D124. Cysteines 118 and 126 form a disulfide. Ca(2+) is bound at residue E170. The Proton donor role is filled by E198. The substrate site is built by K314, H319, and T357. E394 acts as the Proton acceptor in catalysis. Substrate contacts are provided by residues 395–396 and R423; that span reads NA.

This sequence belongs to the glycosyl hydrolase 14 family. The cofactor is Ca(2+).

It catalyses the reaction Hydrolysis of (1-&gt;4)-alpha-D-glucosidic linkages in polysaccharides so as to remove successive maltose units from the non-reducing ends of the chains.. In Cytobacillus firmus (Bacillus firmus), this protein is Beta-amylase.